The chain runs to 303 residues: Recombination-associated protein RdgC (303 aa).

The protein belongs to the RdgC family.

The protein resides in the cytoplasm. It is found in the nucleoid. In terms of biological role, may be involved in recombination. This chain is Recombination-associated protein RdgC, found in Shewanella sediminis (strain HAW-EB3).